A 292-amino-acid chain; its full sequence is GID complex substrate-recognition subunit 10 (292 aa).

It belongs to the GID4/VID24 family. As to quaternary structure, substrate-recognition component of the GID/CTLH ubiquitin ligase complex. In the absence of stress, the complex exists as an inactive anticipatory complex (GID(Ant)), composed of VID30/GID1, the E3 ubiquitin-ligase RMD5/GID2, VID28/GID5, GID8, and the RING-like subunit FYV10/GID9, awaiting a substrate receptor to form the active E3 ligase complex. When cells are shifted to glucose-containing medium, the substrate receptor VID24/GID4 is induced and becomes part of the complex, named GID(SR4). Under osmotic or heat stress, the substrate receptor GID10 is induced and becomes part of the complex, named GID(SR10). Interacts with proteins that have an N-terminal Pro/N-degron, including ART2.

In terms of biological role, substrate-recognition component of the GID E3 ligase complex recruiting N termini and catalyzing ubiquitination of proteins targeted for degradation. GID E3 is regulated through assembly with interchangeable N-degron-binding substrate receptors induced by distinct environmental perturbations. Required for the adaptation to osmotic or heat stress. Required for the regulation of protein levels of the adapter protein ART2, a component of the ART-Rsp5 ubiquitin ligase pathway, part of the plasma membrane quality control. Specific for substrates with an N-terminal Pro (Pro/N-degron), including ART2. Has high affinity for the N-terminal sequence Pro-Tyr-Ile-Thr, and also recognizes nonproline residues such as Met-Tyr-Ile-Thr-Val or Val-Cys-Phe-His. This is GID complex substrate-recognition subunit 10 from Saccharomyces cerevisiae (strain ATCC 204508 / S288c) (Baker's yeast).